The primary structure comprises 210 residues: Proteasome subunit beta (210 aa).

The propeptide at 1 to 9 (MDNDKHLKG) is removed in mature form; by autocatalysis. Catalysis depends on threonine 10, which acts as the Nucleophile.

The protein belongs to the peptidase T1B family. The 20S proteasome core is composed of 14 alpha and 14 beta subunits that assemble into four stacked heptameric rings, resulting in a barrel-shaped structure. The two inner rings, each composed of seven catalytic beta subunits, are sandwiched by two outer rings, each composed of seven alpha subunits. The catalytic chamber with the active sites is on the inside of the barrel. Has a gated structure, the ends of the cylinder being occluded by the N-termini of the alpha-subunits. Is capped at one or both ends by the proteasome regulatory ATPase, PAN.

It localises to the cytoplasm. The catalysed reaction is Cleavage of peptide bonds with very broad specificity.. With respect to regulation, the formation of the proteasomal ATPase PAN-20S proteasome complex, via the docking of the C-termini of PAN into the intersubunit pockets in the alpha-rings, triggers opening of the gate for substrate entry. Interconversion between the open-gate and close-gate conformations leads to a dynamic regulation of the 20S proteasome proteolysis activity. In terms of biological role, component of the proteasome core, a large protease complex with broad specificity involved in protein degradation. The polypeptide is Proteasome subunit beta (Methanohalophilus mahii (strain ATCC 35705 / DSM 5219 / SLP)).